The sequence spans 154 residues: Interleukin-2 (154 aa).

Positions 1–20 (MYRMQLLSCIALSLALVTNS) are cleaved as a signal peptide. O-linked (GalNAc...) threonine glycosylation is present at Thr-23. Cys-78 and Cys-126 form a disulfide bridge.

It belongs to the IL-2 family.

The protein localises to the secreted. Cytokine produced by activated CD4-positive helper T-cells and to a lesser extend activated CD8-positive T-cells and natural killer (NK) cells that plays pivotal roles in the immune response and tolerance. Binds to a receptor complex composed of either the high-affinity trimeric IL-2R (IL2RA/CD25, IL2RB/CD122 and IL2RG/CD132) or the low-affinity dimeric IL-2R (IL2RB and IL2RG). Interaction with the receptor leads to oligomerization and conformation changes in the IL-2R subunits resulting in downstream signaling starting with phosphorylation of JAK1 and JAK3. In turn, JAK1 and JAK3 phosphorylate the receptor to form a docking site leading to the phosphorylation of several substrates including STAT5. This process leads to activation of several pathways including STAT, phosphoinositide-3-kinase/PI3K and mitogen-activated protein kinase/MAPK pathways. Functions as a T-cell growth factor and can increase NK-cell cytolytic activity as well. Promotes strong proliferation of activated B-cells and subsequently immunoglobulin production. Plays a pivotal role in regulating the adaptive immune system by controlling the survival and proliferation of regulatory T-cells, which are required for the maintenance of immune tolerance. Moreover, participates in the differentiation and homeostasis of effector T-cell subsets, including Th1, Th2, Th17 as well as memory CD8-positive T-cells. The protein is Interleukin-2 (IL2) of Macaca fascicularis (Crab-eating macaque).